Here is a 516-residue protein sequence, read N- to C-terminus: DNA-(apurinic or apyrimidinic site) endonuclease 2 (516 aa).

Mg(2+)-binding residues include Asn8 and Glu47. Tyr155 is a catalytic residue. Asp196, Asn198, Asp302, and His303 together coordinate Mg(2+). The active-site Proton donor/acceptor is the Asp196. Catalysis depends on His303, which acts as the Proton acceptor. Residues 357–366 (QPSHQIQAQR) show a composition bias toward polar residues. The tract at residues 357 to 389 (QPSHQIQAQRQPRKACMHSTRLRKSQGGPKRKQ) is disordered. The segment covering 367 to 389 (QPRKACMHSTRLRKSQGGPKRKQ) has biased composition (basic residues). Residue Lys370 forms a Glycyl lysine isopeptide (Lys-Gly) (interchain with G-Cter in ubiquitin) linkage. The tract at residues 389–396 (QKNLMSYF) is required for the interaction and colocalization with PCNA in nuclear foci in presence of oxidative-induced DNA damaging agents. 4 residues coordinate Zn(2+): Cys467, His470, Cys493, and Cys507. The GRF-type zinc finger occupies 467–516 (CGGHREPCVMRTVKKTGPNFGRQFYMCARPRGPPSDPSSRCNFFLWSRPS).

It belongs to the DNA repair enzymes AP/ExoA family. As to quaternary structure, interacts with PCNA. This interaction is increased by misincorporation of uracil in nuclear DNA. Mg(2+) is required as a cofactor. Mn(2+) serves as cofactor. Post-translationally, ubiquitinated by the CUL9-RBX1 complex. Ubiquitinated by MKRN3 at Lys-370 leading to proteasomal degradation. As to expression, expressed in lymphocytes, thymocytes and splenocytes (at protein level). Highly expressed in the thymus and weakly expressed in the bone marrow, spleen, eye, kidney, lung, brain and uterus.

It localises to the nucleus. The protein localises to the cytoplasm. The protein resides in the mitochondrion. The catalysed reaction is Exonucleolytic cleavage in the 3'- to 5'-direction to yield nucleoside 5'-phosphates.. Its activity is regulated as follows. 3'-5' exonuclease activity is activated by sodium and manganese. 3'-5' exonuclease and 3'-phosphodiesterase activities are stimulated in presence of PCNA. In terms of biological role, functions as a weak apurinic/apyrimidinic (AP) endodeoxyribonuclease in the DNA base excision repair (BER) pathway of DNA lesions induced by oxidative and alkylating agents. Initiates repair of AP sites in DNA by catalyzing hydrolytic incision of the phosphodiester backbone immediately adjacent to the damage, generating a single-strand break with 5'-deoxyribose phosphate and 3'-hydroxyl ends. Also displays double-stranded DNA 3'-5' exonuclease, 3'-phosphodiesterase activities. Shows robust 3'-5' exonuclease activity on 3'-recessed heteroduplex DNA and is able to remove mismatched nucleotides preferentially. Shows fairly strong 3'-phosphodiesterase activity involved in the removal of 3'-damaged termini formed in DNA by oxidative agents. In the nucleus functions in the PCNA-dependent BER pathway. Plays a role in reversing blocked 3' DNA ends, problematic lesions that preclude DNA synthesis. Required for somatic hypermutation (SHM) and DNA cleavage step of class switch recombination (CSR) of immunoglobulin genes. Required for proper cell cycle progression during proliferation of peripheral lymphocytes. This Mus musculus (Mouse) protein is DNA-(apurinic or apyrimidinic site) endonuclease 2 (Apex2).